The primary structure comprises 211 residues: Holliday junction branch migration complex subunit RuvA (211 aa).

A domain I region spans residues 1–64 (MIGRLRGMLV…EDAQLLYGFA (64 aa)). Positions 65–143 (NKVERKLFRL…DWQAQQIHLV (79 aa)) are domain II. The tract at residues 144–162 (SDDGVIPEQLSAELSQETT) is flexible linker. The domain III stretch occupies residues 163–211 (FVNDNKGDAINALLSLGYKQVQADKAVKSVYNRGMSSENIIRDALKSMI).

It belongs to the RuvA family. In terms of assembly, homotetramer. Forms an RuvA(8)-RuvB(12)-Holliday junction (HJ) complex. HJ DNA is sandwiched between 2 RuvA tetramers; dsDNA enters through RuvA and exits via RuvB. An RuvB hexamer assembles on each DNA strand where it exits the tetramer. Each RuvB hexamer is contacted by two RuvA subunits (via domain III) on 2 adjacent RuvB subunits; this complex drives branch migration. In the full resolvosome a probable DNA-RuvA(4)-RuvB(12)-RuvC(2) complex forms which resolves the HJ.

The protein localises to the cytoplasm. Functionally, the RuvA-RuvB-RuvC complex processes Holliday junction (HJ) DNA during genetic recombination and DNA repair, while the RuvA-RuvB complex plays an important role in the rescue of blocked DNA replication forks via replication fork reversal (RFR). RuvA specifically binds to HJ cruciform DNA, conferring on it an open structure. The RuvB hexamer acts as an ATP-dependent pump, pulling dsDNA into and through the RuvAB complex. HJ branch migration allows RuvC to scan DNA until it finds its consensus sequence, where it cleaves and resolves the cruciform DNA. This chain is Holliday junction branch migration complex subunit RuvA, found in Colwellia psychrerythraea (strain 34H / ATCC BAA-681) (Vibrio psychroerythus).